The chain runs to 432 residues: Serine--tRNA ligase (432 aa).

An L-serine-binding site is contributed by 239-241; that stretch reads TSE. ATP is bound at residue 270-272; sequence RSE. Glutamate 293 is an L-serine binding site. An ATP-binding site is contributed by 357–360; it reads EISS. Serine 392 contacts L-serine.

This sequence belongs to the class-II aminoacyl-tRNA synthetase family. Type-1 seryl-tRNA synthetase subfamily. As to quaternary structure, homodimer. The tRNA molecule binds across the dimer.

The protein localises to the cytoplasm. The enzyme catalyses tRNA(Ser) + L-serine + ATP = L-seryl-tRNA(Ser) + AMP + diphosphate + H(+). It catalyses the reaction tRNA(Sec) + L-serine + ATP = L-seryl-tRNA(Sec) + AMP + diphosphate + H(+). It participates in aminoacyl-tRNA biosynthesis; selenocysteinyl-tRNA(Sec) biosynthesis; L-seryl-tRNA(Sec) from L-serine and tRNA(Sec): step 1/1. Functionally, catalyzes the attachment of serine to tRNA(Ser). Is also able to aminoacylate tRNA(Sec) with serine, to form the misacylated tRNA L-seryl-tRNA(Sec), which will be further converted into selenocysteinyl-tRNA(Sec). The polypeptide is Serine--tRNA ligase (Methylibium petroleiphilum (strain ATCC BAA-1232 / LMG 22953 / PM1)).